We begin with the raw amino-acid sequence, 110 residues long: UPF0122 protein GK1195 (110 aa).

Belongs to the UPF0122 family.

Functionally, might take part in the signal recognition particle (SRP) pathway. This is inferred from the conservation of its genetic proximity to ftsY/ffh. May be a regulatory protein. This chain is UPF0122 protein GK1195, found in Geobacillus kaustophilus (strain HTA426).